The chain runs to 384 residues: GDSL esterase/lipase At1g28670 (384 aa).

Positions 1 to 24 are cleaved as a signal peptide; it reads MASSLKKLISSFLLVLYSTTIIVA. The active-site Nucleophile is Ser-42. Residues Asn-105, Asn-138, and Asn-321 are each glycosylated (N-linked (GlcNAc...) asparagine). Active-site residues include Asp-346 and His-349.

The protein belongs to the 'GDSL' lipolytic enzyme family.

The protein resides in the secreted. The chain is GDSL esterase/lipase At1g28670 from Arabidopsis thaliana (Mouse-ear cress).